A 162-amino-acid chain; its full sequence is NADH-quinone oxidoreductase subunit I (162 aa).

4Fe-4S ferredoxin-type domains follow at residues L52–G82 and T93–N122. C62, C65, C68, C72, C102, C105, C108, and C112 together coordinate [4Fe-4S] cluster.

The protein belongs to the complex I 23 kDa subunit family. As to quaternary structure, NDH-1 is composed of 14 different subunits. Subunits NuoA, H, J, K, L, M, N constitute the membrane sector of the complex. [4Fe-4S] cluster is required as a cofactor.

The protein localises to the cell inner membrane. It catalyses the reaction a quinone + NADH + 5 H(+)(in) = a quinol + NAD(+) + 4 H(+)(out). In terms of biological role, NDH-1 shuttles electrons from NADH, via FMN and iron-sulfur (Fe-S) centers, to quinones in the respiratory chain. The immediate electron acceptor for the enzyme in this species is believed to be ubiquinone. Couples the redox reaction to proton translocation (for every two electrons transferred, four hydrogen ions are translocated across the cytoplasmic membrane), and thus conserves the redox energy in a proton gradient. In Methylorubrum populi (strain ATCC BAA-705 / NCIMB 13946 / BJ001) (Methylobacterium populi), this protein is NADH-quinone oxidoreductase subunit I.